We begin with the raw amino-acid sequence, 704 residues long: Meprin A subunit beta (704 aa).

A signal peptide spans 1–20 (MDARHQPWFLVFATFLLVSG). Positions 21-64 (LPAPEKFVKDIDGGIDQDIFDINQGLGLDLFEGDIKLEANGKNS) are excised as a propeptide. Residues 21–654 (LPAPEKFVKD…RCEKRGSTRD (634 aa)) are Extracellular-facing. Positions 63-257 (NSIIGDHKRW…LKLNQLYNCT (195 aa)) constitute a Peptidase M12A domain. Cystine bridges form between cysteine 104–cysteine 256, cysteine 125–cysteine 145, and cysteine 266–cysteine 428. Histidine 153 is a Zn(2+) binding site. Glutamate 154 is a catalytic residue. Zn(2+)-binding residues include histidine 157 and histidine 163. N-linked (GlcNAc...) asparagine glycans are attached at residues asparagine 193, asparagine 219, asparagine 255, asparagine 316, asparagine 422, asparagine 437, asparagine 529, asparagine 548, and asparagine 593. One can recognise an MAM domain in the interval 261–430 (SFMDSCDFEL…INLSETRCPH (170 aa)). The MATH domain occupies 431–586 (HIWHIQNFTQ…GDDIYILLTV (156 aa)). The 41-residue stretch at 607–647 (VHNACSEVVCQNGGICVVQDGRAECKCPAGEDWWYMGKRCE) folds into the EGF-like domain. 3 disulfide bridges follow: cysteine 611-cysteine 622, cysteine 616-cysteine 631, and cysteine 633-cysteine 646. Residues 655–678 (TVIIAVSSTVTVFAVMLIITLVSV) form a helical membrane-spanning segment. At 679-704 (YCTRRKYRKKARANTAAMTLENQHAF) the chain is on the cytoplasmic side. The residue at position 697 (threonine 697) is a Phosphothreonine.

In terms of assembly, homotetramer consisting of disulfide-linked beta subunits, or heterotetramer of two alpha and two beta subunits formed by non-covalent association of two disulfide-linked heterodimers. Interacts with MBL2 through its carbohydrate moiety. This interaction may inhibit its catalytic activity. Interacts with TSPAN8. The cofactor is Zn(2+). Proteolytically activated by trypsin in the intestinal lumen and kallikrein-related peptidases in other tissues. In terms of processing, N-glycosylated; contains high mannose and/or complex biantennary structures. Post-translationally, phosphorylated by PKC at multiple sites of its cytoplasmic part. Phosphorylation dcreases activity at the cell surface, leading to diminished substrate cleavage. Isoform 1 is expressed in kidney, intestinal brush borders, and salivary ducts. Isoform 2 has been found in carcinoma cells.

Its subcellular location is the cell membrane. It localises to the secreted. The catalysed reaction is Hydrolysis of proteins, including azocasein, and peptides. Hydrolysis of 5-His-|-Leu-6, 6-Leu-|-Cys-7, 14-Ala-|-Leu-15 and 19-Cys-|-Gly-20 bonds in insulin B chain.. Its activity is regulated as follows. Strongly inhibited by fetuin-A/AHSG. Inhibited by cysteine and by the metal ion chelators EDTA and 1,10-phenanthroline. Not inhibited by 3,4-dichloroisocourmarin, soybean trypsin inhibitor, or the cysteine proteinase inhibitors iodoacetic acid and E-64. Its function is as follows. Membrane metallopeptidase that sheds many membrane-bound proteins. Exhibits a strong preference for acidic amino acids at the P1' position. Known substrates include: FGF19, VGFA, IL1B, IL18, procollagen I and III, E-cadherin, KLK7, gastrin, ADAM10, tenascin-C. The presence of several pro-inflammatory cytokine among substrates implicate MEP1B in inflammation. It is also involved in tissue remodeling due to its capability to degrade extracellular matrix components. This is Meprin A subunit beta (Mep1b) from Mus musculus (Mouse).